Consider the following 417-residue polypeptide: Serine hydroxymethyltransferase (417 aa).

An N6-acetyllysine modification is found at Lys-54. (6S)-5,6,7,8-tetrahydrofolate contacts are provided by residues Leu-121 and 125 to 127 (GHL). Lys-229 carries the post-translational modification N6-(pyridoxal phosphate)lysine. 3 positions are modified to N6-acetyllysine: Lys-250, Lys-285, and Lys-354. Position 355-357 (355-357 (SPF)) interacts with (6S)-5,6,7,8-tetrahydrofolate. An N6-acetyllysine modification is found at Lys-375.

It belongs to the SHMT family. Homodimer. Pyridoxal 5'-phosphate is required as a cofactor.

The protein localises to the cytoplasm. The catalysed reaction is (6R)-5,10-methylene-5,6,7,8-tetrahydrofolate + glycine + H2O = (6S)-5,6,7,8-tetrahydrofolate + L-serine. It participates in one-carbon metabolism; tetrahydrofolate interconversion. Its pathway is amino-acid biosynthesis; glycine biosynthesis; glycine from L-serine: step 1/1. Catalyzes the reversible interconversion of serine and glycine with tetrahydrofolate (THF) serving as the one-carbon carrier. This reaction serves as the major source of one-carbon groups required for the biosynthesis of purines, thymidylate, methionine, and other important biomolecules. Also exhibits THF-independent aldolase activity toward beta-hydroxyamino acids, producing glycine and aldehydes, via a retro-aldol mechanism. The polypeptide is Serine hydroxymethyltransferase (Escherichia coli O1:K1 / APEC).